A 176-amino-acid polypeptide reads, in one-letter code: ATP-dependent protease subunit HslV (176 aa).

Residue T2 is part of the active site. Residues G157, C160, and T163 each contribute to the Na(+) site.

This sequence belongs to the peptidase T1B family. HslV subfamily. In terms of assembly, a double ring-shaped homohexamer of HslV is capped on each side by a ring-shaped HslU homohexamer. The assembly of the HslU/HslV complex is dependent on binding of ATP.

The protein resides in the cytoplasm. The enzyme catalyses ATP-dependent cleavage of peptide bonds with broad specificity.. With respect to regulation, allosterically activated by HslU binding. Functionally, protease subunit of a proteasome-like degradation complex believed to be a general protein degrading machinery. In Pseudomonas fluorescens (strain SBW25), this protein is ATP-dependent protease subunit HslV.